We begin with the raw amino-acid sequence, 207 residues long: Segregation and condensation protein B (207 aa).

The tract at residues 173–207 (DDTAESDNDSADLYYRQFEQTLNETGPETAPKGEQ) is disordered.

This sequence belongs to the ScpB family. As to quaternary structure, homodimer. Homodimerization may be required to stabilize the binding of ScpA to the Smc head domains. Component of a cohesin-like complex composed of ScpA, ScpB and the Smc homodimer, in which ScpA and ScpB bind to the head domain of Smc. The presence of the three proteins is required for the association of the complex with DNA.

Its subcellular location is the cytoplasm. Participates in chromosomal partition during cell division. May act via the formation of a condensin-like complex containing Smc and ScpA that pull DNA away from mid-cell into both cell halves. This is Segregation and condensation protein B from Latilactobacillus sakei subsp. sakei (strain 23K) (Lactobacillus sakei subsp. sakei).